The chain runs to 631 residues: 30-kDa cleavage and polyadenylation specificity factor 30 (631 aa).

The disordered stretch occupies residues 12 to 38 (EGGLDSGPVQNTASVPVAPPENSSSAA). C3H1-type zinc fingers lie at residues 60-87 (SFRQ…HQFD), 88-112 (KARM…VYKH), and 114-141 (NEDI…HAKL). Residues 179 to 234 (QDRPQGQVPMQGQPQESGNLQQQQQQQPQQSQHQVSQTLIPNPADQTNRTSHPLPQ) are disordered. Low complexity predominate over residues 182-215 (PQGQVPMQGQPQESGNLQQQQQQQPQQSQHQVSQ). The span at 216 to 231 (TLIPNPADQTNRTSHP) shows a compositional bias: polar residues. The YTH domain maps to 237–372 (NRYFVVKSNN…SVGEQLASLL (136 aa)). The span at 392–407 (EEEKAKGVNPESRAEN) shows a compositional bias: basic and acidic residues. Disordered regions lie at residues 392–447 (EEEK…RGIM) and 541–631 (PHMG…KKRR). The span at 412 to 432 (PFEDNEEEEEEEDESEEEEES) shows a compositional bias: acidic residues. Residues 573–583 (KTPERSDERGV) are compositionally biased toward basic and acidic residues. Phosphoserine is present on residues Ser610 and Ser612. Basic residues predominate over residues 621–631 (RSRHGEGKKRR).

The protein belongs to the CPSF4/YTH1 family. In terms of assembly, component of the cleavage and polyadenylation specificity factor (CPSF) complex. Can form homodimers. Binds to calmodulin. Forms a complex with cleavage and polyadenylation specificity factor (CPSF) subunits CPSF73-I, CPSF73-II, CPSF100, CPSF160, CFIS2, FIPS3, FIPS5, PAPS2, PAPS3, CLPS3, PCFS1, PCFS4, CSTF50 and CSTF77. Expressed in seedlings, roots, leaves, siliques, stems and flowers.

It is found in the nucleus. It localises to the cytoplasm. Its activity is regulated as follows. Endonuclease activity is repressed by the N-terminal domain of FIPS5. Nuclease activity is inhibited by zinc (&gt;100 uM), cadmium in a progressive manner (50 percent activity at 1 mM Cd(2+)), and high salt levels (e.g. KCl or NaCl &gt;600 mM). Stimulated by ATP in the presence of Zn(2+), even at inhibitory zinc concentrations. Elevated temperatures prevent RNA-binding at 55 degrees Celsius, but endonuclease activity at 70 degrees Celsius. The sulfhydryl reagent dithiothreitol (DTT) inhibits both RNA-binding and nuclease activities. Functionally, component of the cleavage and polyadenylation specificity factor (CPSF) complex that play a key role in pre-mRNA 3'-end formation. May interact with poly(A) polymerase and other factors to bring about cleavage and poly(A) addition. Mediates poly(A) site selection. Binds RNA in a calcium-dependent manner. Exhibits endonuclease activity with an ability to nick and degrade linear as well as circular single-stranded RNA that leaves RNA 3' ends with hydroxyl groups, thus mediating processing of the pre-mRNA as a prelude to the polyadenylation. Involved in the post-transcriptional control, probably via poly(A) addition, of the responses of plants to stress, especially genes mediating tolerance to oxidative stress. Plays a role in the regulation of salicylic acid (SA) production via the control of messenger RNA 3' end processing, thus being a key component of programmed cell death and plant immune responses required for resistance to virulent Pseudomonas syringae pv tomato DC3000 (Pst). This is 30-kDa cleavage and polyadenylation specificity factor 30 from Arabidopsis thaliana (Mouse-ear cress).